A 469-amino-acid chain; its full sequence is Glutamate--tRNA ligase (469 aa).

The 'HIGH' region motif lies at 9 to 19; it reads PSPTGMFHVGG. Positions 100, 102, 122, and 124 each coordinate Zn(2+). Positions 232–236 match the 'KMSKS' region motif; that stretch reads KLSKR. Lys-235 serves as a coordination point for ATP.

Belongs to the class-I aminoacyl-tRNA synthetase family. Glutamate--tRNA ligase type 1 subfamily. In terms of assembly, monomer. Requires Zn(2+) as cofactor.

It is found in the cytoplasm. It catalyses the reaction tRNA(Glu) + L-glutamate + ATP = L-glutamyl-tRNA(Glu) + AMP + diphosphate. Functionally, catalyzes the attachment of glutamate to tRNA(Glu) in a two-step reaction: glutamate is first activated by ATP to form Glu-AMP and then transferred to the acceptor end of tRNA(Glu). This is Glutamate--tRNA ligase from Salinispora arenicola (strain CNS-205).